We begin with the raw amino-acid sequence, 542 residues long: Hydroxylamine reductase (542 aa).

Residues Cys-3, Cys-6, Cys-15, and Cys-21 each coordinate [4Fe-4S] cluster. Hybrid [4Fe-2O-2S] cluster-binding residues include His-238, Glu-262, Cys-307, Cys-398, Cys-426, Cys-451, Glu-485, and Lys-487. Cys-398 is modified (cysteine persulfide).

The protein belongs to the HCP family. It depends on [4Fe-4S] cluster as a cofactor. Hybrid [4Fe-2O-2S] cluster serves as cofactor.

It is found in the cytoplasm. It catalyses the reaction A + NH4(+) + H2O = hydroxylamine + AH2 + H(+). Functionally, catalyzes the reduction of hydroxylamine to form NH(3) and H(2)O. This is Hydroxylamine reductase from Microcystis aeruginosa (strain NIES-843 / IAM M-2473).